The chain runs to 62 residues: Large ribosomal subunit protein bL28 (62 aa).

This sequence belongs to the bacterial ribosomal protein bL28 family.

The protein is Large ribosomal subunit protein bL28 of Acetivibrio thermocellus (strain ATCC 27405 / DSM 1237 / JCM 9322 / NBRC 103400 / NCIMB 10682 / NRRL B-4536 / VPI 7372) (Clostridium thermocellum).